The primary structure comprises 625 residues: Probable potassium transport system protein Kup (625 aa).

The next 12 helical transmembrane spans lie at 10–30 (LAAL…TSPL), 50–70 (LLGV…LKYV), 102–122 (YFPL…DSVI), 142–162 (FDPY…SVQA), 172–192 (FGPI…VNII), 215–235 (FLAF…EALY), 250–270 (WFLV…ALLL), 284–304 (LGAW…IIAS), 340–360 (IYIP…VVGF), 369–389 (AYGI…FFVI), 397–417 (LLLC…LFSA), and 422–442 (LFHG…LMLT).

This sequence belongs to the HAK/KUP transporter (TC 2.A.72) family.

The protein localises to the cell inner membrane. It catalyses the reaction K(+)(in) + H(+)(in) = K(+)(out) + H(+)(out). In terms of biological role, transport of potassium into the cell. Likely operates as a K(+):H(+) symporter. This chain is Probable potassium transport system protein Kup, found in Janthinobacterium sp. (strain Marseille) (Minibacterium massiliensis).